A 410-amino-acid chain; its full sequence is Replication-associated protein G2P (410 aa).

The residue at position 1 (methionine 1) is an N-formylmethionine.

The protein belongs to the inovirus G2P protein family.

It carries out the reaction ATP + (deoxyribonucleotide)n-3'-hydroxyl + 5'-phospho-(deoxyribonucleotide)m = (deoxyribonucleotide)n+m + AMP + diphosphate.. Its function is as follows. Isoform G2P plays an essential role in viral DNA replication. Binds the origin of replication and cleaves the dsDNA replicative form I (RFI) and becomes covalently bound to it via phosphotyrosine bond, generating the dsDNA replicative form II (RFII). In turn, viral DNA replication initiates at the 3'-OH of the cleavage site. After one round of rolling circle synthesis, protein G2P is linked to the newly synthesized ssDNA and joins the ends of the displaced strand to generate a circular single-stranded molecule ready to be packed into a virion. Isoform G10P protein binds to double-stranded DNA and prevents hydrolysis by nucleases. Additionally, G10P is an inhibitor of DNA replication and may have a role in the transition from semiconservative replicative form DNA replication to single-stranded DNA synthesis in the life cycle. The sequence is that of Replication-associated protein G2P (II) from Enterobacteria phage f1 (Bacteriophage f1).